A 206-amino-acid chain; its full sequence is NADH-quinone oxidoreductase subunit C (206 aa).

This sequence belongs to the complex I 30 kDa subunit family. As to quaternary structure, NDH-1 is composed of 14 different subunits. Subunits NuoB, C, D, E, F, and G constitute the peripheral sector of the complex.

It is found in the cell inner membrane. It carries out the reaction a quinone + NADH + 5 H(+)(in) = a quinol + NAD(+) + 4 H(+)(out). In terms of biological role, NDH-1 shuttles electrons from NADH, via FMN and iron-sulfur (Fe-S) centers, to quinones in the respiratory chain. The immediate electron acceptor for the enzyme in this species is believed to be ubiquinone. Couples the redox reaction to proton translocation (for every two electrons transferred, four hydrogen ions are translocated across the cytoplasmic membrane), and thus conserves the redox energy in a proton gradient. The protein is NADH-quinone oxidoreductase subunit C of Nitrosomonas europaea (strain ATCC 19718 / CIP 103999 / KCTC 2705 / NBRC 14298).